A 356-amino-acid chain; its full sequence is NADH dehydrogenase (ubiquinone) complex I, assembly factor 6 homolog (356 aa).

A mitochondrion-targeting transit peptide spans 1-41; the sequence is MIRNSGRILFNSLKNSNVKLINRNVIINSNIRLFSTSTNNT.

Belongs to the NDUFAF6 family.

It localises to the mitochondrion inner membrane. Involved in the assembly of mitochondrial NADH:ubiquinone oxidoreductase complex (complex I) at early stages. This chain is NADH dehydrogenase (ubiquinone) complex I, assembly factor 6 homolog, found in Dictyostelium discoideum (Social amoeba).